The sequence spans 251 residues: Core protein VP8 (251 aa).

Residues 1 to 32 constitute a propeptide, removed by core protease OPG083; it reads MSLLLENLIEEDTIFFAGSISEYDDLQMVIAG.

The protein belongs to the orthopoxvirus OPG098 family. In terms of processing, undergoes morphogenesis-associated proteolysis which cleaves the 28 kDa to a 25-kDa product. Proteolytic cleavage of major core proteins P4a (OPG136), P4b (OPG129), and VP8 (OPG098), which occurs at a late stage of core formation, is required for production of infectious mature virions (MV).

It localises to the virion. It is found in the host cytoplasm. Major core structural protein. The polypeptide is Core protein VP8 (OPG098) (Homo sapiens (Human)).